Here is a 145-residue protein sequence, read N- to C-terminus: Mini-ribonuclease 3 (145 aa).

The active site involves Asp-27.

This sequence belongs to the MrnC RNase family. Homodimer. It depends on Mg(2+) as a cofactor.

The protein localises to the cytoplasm. Involved in correct processing of both the 5' and 3' ends of 23S rRNA precursor. Processes 30S rRNA precursor transcript even in absence of ribonuclease 3 (Rnc); Rnc processes 30S rRNA into smaller rRNA precursors. This Kosmotoga olearia (strain ATCC BAA-1733 / DSM 21960 / TBF 19.5.1) protein is Mini-ribonuclease 3.